We begin with the raw amino-acid sequence, 83 residues long: Antitoxin ChpS (83 aa).

Residues 3–48 (ITIKRWGNSAGMVIPNIVMKELNLQPGQSVEAQVSNNQLILTPISR) enclose the SpoVT-AbrB domain.

This sequence belongs to the PemI family. As to quaternary structure, interacts with ChpB, inhibiting its endoribonuclease activity.

Functionally, antitoxin component of a type II toxin-antitoxin (TA) system. May be involved in the regulation of cell growth. It acts as a suppressor of the endoribonuclease (inhibitory function) of ChpB protein. Both ChpS and ChpB probably bind to the promoter region of the chpS-chpB operon to autoregulate their synthesis. In Escherichia coli (strain K12), this protein is Antitoxin ChpS (chpS).